Consider the following 156-residue polypeptide: Small ribosomal subunit protein uS7 (156 aa).

The protein belongs to the universal ribosomal protein uS7 family. As to quaternary structure, part of the 30S ribosomal subunit. Contacts proteins S9 and S11.

In terms of biological role, one of the primary rRNA binding proteins, it binds directly to 16S rRNA where it nucleates assembly of the head domain of the 30S subunit. Is located at the subunit interface close to the decoding center, probably blocks exit of the E-site tRNA. The protein is Small ribosomal subunit protein uS7 of Syntrophomonas wolfei subsp. wolfei (strain DSM 2245B / Goettingen).